A 264-amino-acid chain; its full sequence is Thymidylate synthase (264 aa).

Residues Arg-21 and 126-127 (RR) contribute to the dUMP site. Catalysis depends on Cys-146, which acts as the Nucleophile. DUMP-binding positions include 166–169 (RSAD), Asn-177, and 207–209 (HLY). Residue Asp-169 coordinates (6R)-5,10-methylene-5,6,7,8-tetrahydrofolate. Position 263 (Ala-263) interacts with (6R)-5,10-methylene-5,6,7,8-tetrahydrofolate.

Belongs to the thymidylate synthase family. Bacterial-type ThyA subfamily. Homodimer.

It is found in the cytoplasm. The catalysed reaction is dUMP + (6R)-5,10-methylene-5,6,7,8-tetrahydrofolate = 7,8-dihydrofolate + dTMP. It participates in pyrimidine metabolism; dTTP biosynthesis. In terms of biological role, catalyzes the reductive methylation of 2'-deoxyuridine-5'-monophosphate (dUMP) to 2'-deoxythymidine-5'-monophosphate (dTMP) while utilizing 5,10-methylenetetrahydrofolate (mTHF) as the methyl donor and reductant in the reaction, yielding dihydrofolate (DHF) as a by-product. This enzymatic reaction provides an intracellular de novo source of dTMP, an essential precursor for DNA biosynthesis. This Bradyrhizobium diazoefficiens (strain JCM 10833 / BCRC 13528 / IAM 13628 / NBRC 14792 / USDA 110) protein is Thymidylate synthase.